Consider the following 65-residue polypeptide: Large ribosomal subunit protein uL29 (65 aa).

Belongs to the universal ribosomal protein uL29 family.

The protein is Large ribosomal subunit protein uL29 of Lactobacillus delbrueckii subsp. bulgaricus (strain ATCC 11842 / DSM 20081 / BCRC 10696 / JCM 1002 / NBRC 13953 / NCIMB 11778 / NCTC 12712 / WDCM 00102 / Lb 14).